Consider the following 607-residue polypeptide: Elongation factor 4 (607 aa).

The 183-residue stretch at 11-193 (SKIRNFSIIA…QIVEKVPAPT (183 aa)) folds into the tr-type G domain. GTP-binding positions include 23-28 (DHGKST) and 140-143 (NKID).

It belongs to the TRAFAC class translation factor GTPase superfamily. Classic translation factor GTPase family. LepA subfamily.

It localises to the cell membrane. It carries out the reaction GTP + H2O = GDP + phosphate + H(+). In terms of biological role, required for accurate and efficient protein synthesis under certain stress conditions. May act as a fidelity factor of the translation reaction, by catalyzing a one-codon backward translocation of tRNAs on improperly translocated ribosomes. Back-translocation proceeds from a post-translocation (POST) complex to a pre-translocation (PRE) complex, thus giving elongation factor G a second chance to translocate the tRNAs correctly. Binds to ribosomes in a GTP-dependent manner. This Bacillus cereus (strain AH820) protein is Elongation factor 4.